A 130-amino-acid chain; its full sequence is MPATNILANLFVTLYNNETRRKGECTILPTSKLGIEVLKTLQKDGYIGEFEHIDDKRGGKFKIKLLAKITKCGAISPRFKVKTDEFNNWEQQYLPAYDRGMLLVTTNQGVMSHHEATQKGIGGFLIGYVY.

Belongs to the universal ribosomal protein uS8 family. As to quaternary structure, part of the 30S ribosomal subunit.

Its function is as follows. One of the primary rRNA binding proteins, it binds directly to 16S rRNA central domain where it helps coordinate assembly of the platform of the 30S subunit. In Nitrosopumilus maritimus (strain SCM1), this protein is Small ribosomal subunit protein uS8.